The following is a 213-amino-acid chain: Putative 3-methyladenine DNA glycosylase (213 aa).

This sequence belongs to the DNA glycosylase MPG family.

This Latilactobacillus sakei subsp. sakei (strain 23K) (Lactobacillus sakei subsp. sakei) protein is Putative 3-methyladenine DNA glycosylase.